Consider the following 284-residue polypeptide: MEMO1 family protein SSO0066 (284 aa).

The protein belongs to the MEMO1 family.

This chain is MEMO1 family protein SSO0066, found in Saccharolobus solfataricus (strain ATCC 35092 / DSM 1617 / JCM 11322 / P2) (Sulfolobus solfataricus).